Reading from the N-terminus, the 71-residue chain is uncharacterized protein (71 aa).

A helical transmembrane segment spans residues 37–57 (IGVGVSDGVSAGVGVGVAMII).

The protein resides in the membrane. This is an uncharacterized protein from Dictyostelium discoideum (Social amoeba).